A 1070-amino-acid chain; its full sequence is Ubiquitin-protein ligase E3B (1070 aa).

M1 carries the N-acetylmethionine modification. One can recognise an IQ domain in the interval R29–D58. At S421 the chain carries Phosphoserine. The HECT domain occupies S704–S1070. C1038 acts as the Glycyl thioester intermediate in catalysis.

As to expression, widely expressed. High expression is observed in developing central nervous system.

Its subcellular location is the postsynaptic density. It carries out the reaction S-ubiquitinyl-[E2 ubiquitin-conjugating enzyme]-L-cysteine + [acceptor protein]-L-lysine = [E2 ubiquitin-conjugating enzyme]-L-cysteine + N(6)-ubiquitinyl-[acceptor protein]-L-lysine.. The protein operates within protein modification; protein ubiquitination. E3 ubiquitin-protein ligase which accepts ubiquitin from an E2 ubiquitin-conjugating enzyme in the form of a thioester and then directly transfers the ubiquitin to targeted substrates. Ubiquitinates BCKDK and targets it for degradation, thereby regulating various metabolic processes. Involved in the positive regulation of neurite branching in hippocampal neurons and the control of neuronal spine number and morphology, through the ubiquitination of PPP3CC. The protein is Ubiquitin-protein ligase E3B (Ube3b) of Mus musculus (Mouse).